An 874-amino-acid polypeptide reads, in one-letter code: Probable inorganic carbon transporter subunit DabA (874 aa).

Residues cysteine 398, aspartate 400, histidine 580, and cysteine 595 each contribute to the Zn(2+) site.

It belongs to the inorganic carbon transporter (TC 9.A.2) DabA family. Forms a complex with DabB. Requires Zn(2+) as cofactor.

Its subcellular location is the cell membrane. In terms of biological role, part of an energy-coupled inorganic carbon pump. This Bacillus cereus (strain AH820) protein is Probable inorganic carbon transporter subunit DabA.